The following is a 346-amino-acid chain: MLPCFQLLRIGGGRGVDLYTFHPPSGAGCTYRLGCRADLCDVALRPQQEPGFISEVHAELHAERRGDDWRVSLEDHSSQGTLVNNVRLPRGHRLELSDGDLLTFGPEGPPGTSPSEFYMFQQVRVKPQDFAAITIPRSRGEEGETRAGFRPMLPSQGAPQRPLSTLSPTPKATLILNSIGSLSKLHLQPLTFSRSGSGPQNPPVSTTPGEVRTTPSAPPPRNRRKSAHRVLAELDDEREAPESLPPVLIEPRKKLLRVEKTPPTPSGNRRGRPRKHPVSIPRAPPAAGGGEPCAAPCCCLPQEETVAWVQCDGCDTWFHVACVGCSIQAAKEADFRCPGCRVGIQS.

An FHA domain is found at 31–88 (YRLGCRADLCDVALRPQQEPGFISEVHAELHAERRGDDWRVSLEDHSSQGTLVNNVRL). The residue at position 78 (Ser-78) is a Phosphoserine. Disordered stretches follow at residues 136 to 168 (PRSR…TLSP) and 190 to 289 (LTFS…AAGG). Positions 138-147 (SRGEEGETRA) are enriched in basic and acidic residues. The span at 190 to 208 (LTFSRSGSGPQNPPVSTTP) shows a compositional bias: polar residues. Basic and acidic residues predominate over residues 250–260 (EPRKKLLRVEK). Residues 294–343 (AAPCCCLPQEETVAWVQCDGCDTWFHVACVGCSIQAAKEADFRCPGCRVG) form a PHD-type zinc finger. 8 residues coordinate Zn(2+): Cys-297, Cys-299, Cys-311, Cys-314, His-319, Cys-322, Cys-337, and Cys-340.

It is found in the nucleus. Potential transcription factor that may play a role in the regulation of genes involved in cell cycle G1/S transition. May bind to regulatory elements of genes, including the promoter of the transcription factor FOXO1. This Sus scrofa (Pig) protein is Transcription factor 19 (TCF19).